The following is a 307-amino-acid chain: Capsid assembly scaffolding protein (307 aa).

2 stretches are compositionally biased toward acidic residues: residues 45–54 (IELASDEVET) and 83–101 (EPTD…EGSE). Positions 45 to 105 (IELASDEVET…GTEGSEEFTP (61 aa)) are disordered.

This sequence belongs to the T7likevirus capsid assembly scaffolding protein family.

Functionally, scaffolding protein involved in the icosahedric procapsid assembly. Coassembles with the capsid proteins to form the procapsid, in which the scaffolding protein is found within the external shell of icosahedrally arranged capsid protein subunits. In a subsequent step the scaffolding protein molecules are released from the procapsid. Facilitates assembly by binding to gp10 hexamers but not the pentamers and locking them into a morphogenically correct conformation. This is Capsid assembly scaffolding protein from Escherichia coli (Bacteriophage T7).